The following is a 546-amino-acid chain: Alkaline phosphatase PafA (546 aa).

A signal peptide spans 1 to 25 (MLTPKKWLLGVLVVSGMLGAQKTNA). Zn(2+) contacts are provided by aspartate 38 and threonine 79. The Phosphothreonine intermediate role is filled by threonine 79. Residues asparagine 100 and 162-164 (KDR) contribute to the substrate site. The Zn(2+) site is built by aspartate 305, histidine 309, aspartate 352, histidine 353, and histidine 486.

Requires Zn(2+) as cofactor.

The protein resides in the periplasm. The enzyme catalyses a phosphate monoester + H2O = an alcohol + phosphate. Strongly inhibited by orthovanadate and EDTA. Also inhibited by inorganic phosphate. Functionally, alkaline phosphatase with broad substrate specificity. Has phosphatase activity towards nucleotide phosphates with a preference for ATP. Active towards a great variety of phosphomonoesters with the exception of 2',3'-cyclic AMP and myo-inositol hexakisphosphate. This Elizabethkingia meningoseptica (Chryseobacterium meningosepticum) protein is Alkaline phosphatase PafA.